A 306-amino-acid polypeptide reads, in one-letter code: Mitochondrial basic amino acids transporter (306 aa).

The next 6 helical transmembrane spans lie at 2–22, 61–81, 96–116, 153–172, 187–207, and 255–275; these read ALDF…GHPF, GLGS…GVQG, FLAG…MELA, GMVS…FLTY, LLVP…WLST, and LLRA…VLTY. Solcar repeat units follow at residues 2-86, 90-178, and 190-275; these read ALDF…TLRA, DSPL…MTRA, and PKLL…VLTY. Residues 284 to 306 are disordered; that stretch reads DSEAALGTSPTPAGSALAQPSSL. The span at 291–306 shows a compositional bias: polar residues; the sequence is TSPTPAGSALAQPSSL.

Belongs to the mitochondrial carrier (TC 2.A.29) family. As to expression, widely expressed, with highest levels in the brain, including cortex, cerebellum, hippocampus and hypothalamus, and moderate levels in liver, kidney, heart and testis.

It localises to the mitochondrion inner membrane. The catalysed reaction is L-lysine(out) + L-arginine(in) = L-lysine(in) + L-arginine(out). The enzyme catalyses L-histidine(out) + L-arginine(in) = L-histidine(in) + L-arginine(out). It carries out the reaction L-ornithine(in) + L-arginine(out) = L-ornithine(out) + L-arginine(in). It catalyses the reaction L-homoarginine(in) + L-arginine(out) = L-homoarginine(out) + L-arginine(in). The catalysed reaction is N(omega)-methyl-L-arginine(in) + L-arginine(out) = N(omega)-methyl-L-arginine(out) + L-arginine(in). The enzyme catalyses L-arginine(in) = L-arginine(out). It carries out the reaction L-lysine(in) = L-lysine(out). It catalyses the reaction L-ornithine(in) = L-ornithine(out). The catalysed reaction is L-histidine(out) = L-histidine(in). Its function is as follows. Mitochondrial transporter of arginine, lysine, homoarginine, methylarginine. Transports with a much lesser extent, ornithine and histidine. Does not transport carnitine nor acylcarnitines. Functions by both counter-exchange and uniport mechanisms. Plays a physiological role in the import of basic amino acids into mitochondria for mitochondrial protein synthesis and amino acid degradation. This chain is Mitochondrial basic amino acids transporter (Slc25a29), found in Mus musculus (Mouse).